The chain runs to 474 residues: 3-isopropylmalate dehydratase large subunit (474 aa).

3 residues coordinate [4Fe-4S] cluster: Cys355, Cys415, and Cys418.

This sequence belongs to the aconitase/IPM isomerase family. LeuC type 1 subfamily. As to quaternary structure, heterodimer of LeuC and LeuD. [4Fe-4S] cluster is required as a cofactor.

The catalysed reaction is (2R,3S)-3-isopropylmalate = (2S)-2-isopropylmalate. It participates in amino-acid biosynthesis; L-leucine biosynthesis; L-leucine from 3-methyl-2-oxobutanoate: step 2/4. Functionally, catalyzes the isomerization between 2-isopropylmalate and 3-isopropylmalate, via the formation of 2-isopropylmaleate. The polypeptide is 3-isopropylmalate dehydratase large subunit (Shewanella sp. (strain ANA-3)).